Reading from the N-terminus, the 407-residue chain is Probable tRNA sulfurtransferase (407 aa).

Residues N61–V165 form the THUMP domain. Residues M183 to L184, H208 to F209, R265, G287, and Q296 contribute to the ATP site.

The protein belongs to the ThiI family.

It is found in the cytoplasm. The enzyme catalyses [ThiI sulfur-carrier protein]-S-sulfanyl-L-cysteine + a uridine in tRNA + 2 reduced [2Fe-2S]-[ferredoxin] + ATP + H(+) = [ThiI sulfur-carrier protein]-L-cysteine + a 4-thiouridine in tRNA + 2 oxidized [2Fe-2S]-[ferredoxin] + AMP + diphosphate. It carries out the reaction [ThiS sulfur-carrier protein]-C-terminal Gly-Gly-AMP + S-sulfanyl-L-cysteinyl-[cysteine desulfurase] + AH2 = [ThiS sulfur-carrier protein]-C-terminal-Gly-aminoethanethioate + L-cysteinyl-[cysteine desulfurase] + A + AMP + 2 H(+). Its pathway is cofactor biosynthesis; thiamine diphosphate biosynthesis. Its function is as follows. Catalyzes the ATP-dependent transfer of a sulfur to tRNA to produce 4-thiouridine in position 8 of tRNAs, which functions as a near-UV photosensor. Also catalyzes the transfer of sulfur to the sulfur carrier protein ThiS, forming ThiS-thiocarboxylate. This is a step in the synthesis of thiazole, in the thiamine biosynthesis pathway. The sulfur is donated as persulfide by IscS. This chain is Probable tRNA sulfurtransferase, found in Staphylococcus aureus (strain bovine RF122 / ET3-1).